Here is a 649-residue protein sequence, read N- to C-terminus: Glucan endo-1,3-beta-glucosidase btgC (649 aa).

2 disordered regions span residues 1–50 (MGDR…AHTH) and 110–224 (YHTT…AGGA). Over 1-274 (MGDRSEQYGD…PRPSGASRKR (274 aa)) the chain is Cytoplasmic. Positions 144–157 (GSSAALSAAGAPAG) are enriched in low complexity. A compositionally biased stretch (acidic residues) spans 198-208 (NPDDILDDGDD). Residues 275-295 (GWIIGGILAFIVIGAIVGGAV) traverse the membrane as a helical; Signal-anchor for type II membrane protein segment. Topologically, residues 296 to 649 (GGTLGNRRSE…IPDCGGKTAA (354 aa)) are extracellular. The disordered stretch occupies residues 301–329 (NRRSETASESSEVSADDDTETNGDLDKNS). Acidic residues predominate over residues 314 to 323 (SADDDTETNG). 3 N-linked (GlcNAc...) asparagine glycosylation sites follow: Asn369, Asn392, and Asn420. The Proton donor role is filled by Glu452. Catalysis depends on Glu551, which acts as the Nucleophile. A glycan (N-linked (GlcNAc...) asparagine) is linked at Asn596.

This sequence belongs to the glycosyl hydrolase 17 family.

It localises to the cell membrane. It carries out the reaction Hydrolysis of (1-&gt;3)-beta-D-glucosidic linkages in (1-&gt;3)-beta-D-glucans.. Glucanases play a role in cell expansion during growth, in cell-cell fusion during mating, and in spore release during sporulation. This enzyme may be involved in beta-glucan degradation. Active on laminarin and lichenan. In Emericella nidulans (strain FGSC A4 / ATCC 38163 / CBS 112.46 / NRRL 194 / M139) (Aspergillus nidulans), this protein is Glucan endo-1,3-beta-glucosidase btgC (btgC).